Here is a 377-residue protein sequence, read N- to C-terminus: Phospho-N-acetylmuramoyl-pentapeptide-transferase (377 aa).

A run of 11 helical transmembrane segments spans residues 9 to 29 (YITLRAVLACATALLIGLVAG), 62 to 82 (MGGALILIAIAISTLLWADWI), 85 to 105 (FVWVVLLVTFGFGWIGWMDDY), 122 to 142 (FFWQATIGLVAAVYLAFAVSA), 155 to 175 (WVGSGFTMPLPTRADLIVPFF), 178 to 198 (VSYPLGVLGFVALTWAVIVGT), 210 to 230 (GLAIMPTVMVGSALGIFAYVV), 247 to 267 (AAELMVLCAAIGGAGLAFLWF), 274 to 294 (VFMGDVGALALGGALGTIAVI), 299 to 319 (IVLFIMGGVFVVETLSVMVQV), and 354 to 374 (QVVVRFWIITMMLVLVGLSTL).

This sequence belongs to the glycosyltransferase 4 family. MraY subfamily. Mg(2+) is required as a cofactor.

Its subcellular location is the cell inner membrane. It catalyses the reaction UDP-N-acetyl-alpha-D-muramoyl-L-alanyl-gamma-D-glutamyl-meso-2,6-diaminopimeloyl-D-alanyl-D-alanine + di-trans,octa-cis-undecaprenyl phosphate = di-trans,octa-cis-undecaprenyl diphospho-N-acetyl-alpha-D-muramoyl-L-alanyl-D-glutamyl-meso-2,6-diaminopimeloyl-D-alanyl-D-alanine + UMP. It functions in the pathway cell wall biogenesis; peptidoglycan biosynthesis. In terms of biological role, catalyzes the initial step of the lipid cycle reactions in the biosynthesis of the cell wall peptidoglycan: transfers peptidoglycan precursor phospho-MurNAc-pentapeptide from UDP-MurNAc-pentapeptide onto the lipid carrier undecaprenyl phosphate, yielding undecaprenyl-pyrophosphoryl-MurNAc-pentapeptide, known as lipid I. This chain is Phospho-N-acetylmuramoyl-pentapeptide-transferase, found in Bordetella parapertussis (strain 12822 / ATCC BAA-587 / NCTC 13253).